The chain runs to 951 residues: Metal transporter CNNM1 (951 aa).

A helical transmembrane segment spans residues 23–43; sequence AVLLLFFSLSPRPPAAAAWLL. The tract at residues 116–135 is disordered; the sequence is GGVAPSAVPTRPPGPQRCRE. The CNNM transmembrane domain occupies 218 to 414; the sequence is LLPPAWLRAL…DPYSDLVKEE (197 aa). Helical transmembrane passes span 222-242, 282-302, and 321-341; these read AWLR…FSGL, LLCT…GWLY, and IHFP…GAEI. CBS domains lie at 433 to 495 and 502 to 568; these read LTPL…CTPL and YNRP…ILDE. Composition is skewed to polar residues over residues 731–740 and 814–824; these read SRCSGLNRSE and KAPTTRGTPQT. Disordered regions lie at residues 731–753 and 795–830; these read SRCS…GGSN and MDSS…DDPA. Phosphothreonine occurs at positions 821 and 824. Serine 850 is modified (phosphoserine). The segment at 920-951 is disordered; the sequence is KLLRTLSGQKRKRSPEGERTSEDNSNLTPLIT. A compositionally biased stretch (polar residues) spans 942–951; sequence DNSNLTPLIT.

The protein belongs to the ACDP family. Restricted to brain and testis.

Its subcellular location is the cell membrane. Functionally, probable metal transporter. This Homo sapiens (Human) protein is Metal transporter CNNM1 (CNNM1).